The sequence spans 158 residues: Endoribonuclease YbeY (158 aa).

Residues His-118, His-122, and His-128 each contribute to the Zn(2+) site.

It belongs to the endoribonuclease YbeY family. Requires Zn(2+) as cofactor.

It is found in the cytoplasm. Its function is as follows. Single strand-specific metallo-endoribonuclease involved in late-stage 70S ribosome quality control and in maturation of the 3' terminus of the 16S rRNA. The polypeptide is Endoribonuclease YbeY (Bartonella henselae (strain ATCC 49882 / DSM 28221 / CCUG 30454 / Houston 1) (Rochalimaea henselae)).